The chain runs to 250 residues: Osmotin-like protein OSML15 (250 aa).

Residues 1-21 form the signal peptide; sequence MSHLTTCLVFFLLAFVTYTNA. 8 disulfide bridges follow: cysteine 31-cysteine 226, cysteine 73-cysteine 83, cysteine 88-cysteine 94, cysteine 142-cysteine 214, cysteine 147-cysteine 197, cysteine 155-cysteine 165, cysteine 169-cysteine 178, and cysteine 179-cysteine 184.

Belongs to the thaumatin family.

The polypeptide is Osmotin-like protein OSML15 (Solanum commersonii (Commerson's wild potato)).